A 487-amino-acid chain; its full sequence is MDPVAGLVLGLCCLLLLSLWKQNSGRGKLPPGPTPFPIIGNILQIDVKDISKSLTKFSERYGPVFTVYLGMKPTVVLHGYKAVKEALVDLGEEFAGRGHFPIAEKVNKGLGIVFTNANTWKEMRRFSLMTLRNFGMGKRSIEDRVQEEARCLVEELRKTNALPCDPTFILGCAPCNVICSVILHNRFDYKDEEFLKLMERLNENIRILSSPWLQVYNNFPALLDYFPGIHKTLLKNADYTKNFIMEKVKEHQKLLDVNNPRDFIDCFLIKMEKENNLEFTLGSLVIAVFDLFGAGTETTSTTLRYSLLLLLKHPEVAARVQEEIERVIGRHRSPCMQDRSHMPYTDAVIHEIQRFIDLLPTNLPHAVTRDVKFRNYFIPKGTDIITSLTSVLHDEKAFPNPKVFDPGHFLDESGNFKKSDYFMPFSAGKRMCVGEGLARMELFLFLTSILQNFKLQSLVEPKDLDITAVVNGFVSVPPSYQLCFIPI.

Cys-432 provides a ligand contact to heme.

Belongs to the cytochrome P450 family. Heme serves as cofactor.

The protein localises to the endoplasmic reticulum membrane. The protein resides in the microsome membrane. It catalyses the reaction an organic molecule + reduced [NADPH--hemoprotein reductase] + O2 = an alcohol + oxidized [NADPH--hemoprotein reductase] + H2O + H(+). Functionally, cytochromes P450 are a group of heme-thiolate monooxygenases. In liver microsomes, this enzyme is involved in an NADPH-dependent electron transport pathway. It oxidizes a variety of structurally unrelated compounds, including steroids, fatty acids, and xenobiotics. In Oryctolagus cuniculus (Rabbit), this protein is Cytochrome P450 2C4 (CYP2C4).